Reading from the N-terminus, the 153-residue chain is D-aminoacyl-tRNA deacylase (153 aa).

A Gly-cisPro motif, important for rejection of L-amino acids motif is present at residues 142-143; that stretch reads GP.

It belongs to the DTD family. In terms of assembly, homodimer.

The protein resides in the cytoplasm. It carries out the reaction glycyl-tRNA(Ala) + H2O = tRNA(Ala) + glycine + H(+). It catalyses the reaction a D-aminoacyl-tRNA + H2O = a tRNA + a D-alpha-amino acid + H(+). In terms of biological role, an aminoacyl-tRNA editing enzyme that deacylates mischarged D-aminoacyl-tRNAs. Also deacylates mischarged glycyl-tRNA(Ala), protecting cells against glycine mischarging by AlaRS. Acts via tRNA-based rather than protein-based catalysis; rejects L-amino acids rather than detecting D-amino acids in the active site. By recycling D-aminoacyl-tRNA to D-amino acids and free tRNA molecules, this enzyme counteracts the toxicity associated with the formation of D-aminoacyl-tRNA entities in vivo and helps enforce protein L-homochirality. The polypeptide is D-aminoacyl-tRNA deacylase (Cupriavidus taiwanensis (strain DSM 17343 / BCRC 17206 / CCUG 44338 / CIP 107171 / LMG 19424 / R1) (Ralstonia taiwanensis (strain LMG 19424))).